We begin with the raw amino-acid sequence, 172 residues long: Crossover junction endodeoxyribonuclease RuvC (172 aa).

Active-site residues include Asp7, Glu68, and Asp140. Residues Asp7, Glu68, and Asp140 each contribute to the Mg(2+) site.

This sequence belongs to the RuvC family. In terms of assembly, homodimer which binds Holliday junction (HJ) DNA. The HJ becomes 2-fold symmetrical on binding to RuvC with unstacked arms; it has a different conformation from HJ DNA in complex with RuvA. In the full resolvosome a probable DNA-RuvA(4)-RuvB(12)-RuvC(2) complex forms which resolves the HJ. It depends on Mg(2+) as a cofactor.

Its subcellular location is the cytoplasm. It catalyses the reaction Endonucleolytic cleavage at a junction such as a reciprocal single-stranded crossover between two homologous DNA duplexes (Holliday junction).. Functionally, the RuvA-RuvB-RuvC complex processes Holliday junction (HJ) DNA during genetic recombination and DNA repair. Endonuclease that resolves HJ intermediates. Cleaves cruciform DNA by making single-stranded nicks across the HJ at symmetrical positions within the homologous arms, yielding a 5'-phosphate and a 3'-hydroxyl group; requires a central core of homology in the junction. The consensus cleavage sequence is 5'-(A/T)TT(C/G)-3'. Cleavage occurs on the 3'-side of the TT dinucleotide at the point of strand exchange. HJ branch migration catalyzed by RuvA-RuvB allows RuvC to scan DNA until it finds its consensus sequence, where it cleaves and resolves the cruciform DNA. The sequence is that of Crossover junction endodeoxyribonuclease RuvC from Polynucleobacter asymbioticus (strain DSM 18221 / CIP 109841 / QLW-P1DMWA-1) (Polynucleobacter necessarius subsp. asymbioticus).